A 264-amino-acid chain; its full sequence is Glutamate racemase (264 aa).

Residues 10–11 (DS) and 42–43 (YG) each bind substrate. Residue Cys73 is the Proton donor/acceptor of the active site. Substrate is bound at residue 74–75 (NT). Cys183 (proton donor/acceptor) is an active-site residue. 184–185 (TH) lines the substrate pocket.

Belongs to the aspartate/glutamate racemases family.

The catalysed reaction is L-glutamate = D-glutamate. It functions in the pathway cell wall biogenesis; peptidoglycan biosynthesis. Functionally, provides the (R)-glutamate required for cell wall biosynthesis. This is Glutamate racemase from Streptococcus agalactiae serotype Ia (strain ATCC 27591 / A909 / CDC SS700).